A 348-amino-acid chain; its full sequence is Phosphoribosylformylglycinamidine cyclo-ligase (348 aa).

It belongs to the AIR synthase family.

Its subcellular location is the cytoplasm. The catalysed reaction is 2-formamido-N(1)-(5-O-phospho-beta-D-ribosyl)acetamidine + ATP = 5-amino-1-(5-phospho-beta-D-ribosyl)imidazole + ADP + phosphate + H(+). The protein operates within purine metabolism; IMP biosynthesis via de novo pathway; 5-amino-1-(5-phospho-D-ribosyl)imidazole from N(2)-formyl-N(1)-(5-phospho-D-ribosyl)glycinamide: step 2/2. The sequence is that of Phosphoribosylformylglycinamidine cyclo-ligase from Geobacter metallireducens (strain ATCC 53774 / DSM 7210 / GS-15).